The following is a 401-amino-acid chain: MAEKVVLAYSGGLDTSIIIPWLKENYGYEVIAMVADVGQGEELEPLREKAIKSGAAKIYIEDVKEEFVRDFVFPMLKAGAVYENKYLLGTSVARPLIAKKLVEIAEKEGAVAVAHGATGKGNDQVRFELTVKALNPDLKIIAPWREWEIKSREDAIDYAEKRGIPVPVTKKQPYSMDRNLWHLSHEGGILEDPAVEPPEDVLLLTNPPEKAPDQPEYVEIEFVKGEPVAVNGEKLSPVELIFKLNELGGKHGIGIADMVENRLVGMKSRGVYETPGGTILTFAHRELESLTLDRQTMHFKQMVALKYAELIYDGLWFTPLREALEAFVDKTQETVTGKVRVKLYKGNIYPAGITSPYSLYVKDLATFGEDNLYNQKDAEGFINLFGLPLKVRAMTQKPYQK.

Residues 8 to 16 and alanine 35 contribute to the ATP site; that span reads AYSGGLDTS. 2 residues coordinate L-citrulline: tyrosine 86 and serine 91. Glycine 116 contacts ATP. Residues threonine 118, asparagine 122, and aspartate 123 each coordinate L-aspartate. Asparagine 122 lines the L-citrulline pocket. Residues arginine 126, serine 175, serine 184, glutamate 260, and tyrosine 272 each coordinate L-citrulline.

Belongs to the argininosuccinate synthase family. Type 1 subfamily. As to quaternary structure, homotetramer.

It is found in the cytoplasm. It catalyses the reaction L-citrulline + L-aspartate + ATP = 2-(N(omega)-L-arginino)succinate + AMP + diphosphate + H(+). Its pathway is amino-acid biosynthesis; L-arginine biosynthesis; L-arginine from L-ornithine and carbamoyl phosphate: step 2/3. The sequence is that of Argininosuccinate synthase from Carboxydothermus hydrogenoformans (strain ATCC BAA-161 / DSM 6008 / Z-2901).